We begin with the raw amino-acid sequence, 453 residues long: Pup--protein ligase (453 aa).

Glutamate 9 is a Mg(2+) binding site. Position 53 (arginine 53) interacts with ATP. Tyrosine 55 is a Mg(2+) binding site. Residue aspartate 57 is the Proton acceptor of the active site. Glutamate 63 serves as a coordination point for Mg(2+). Positions 66 and 420 each coordinate ATP.

It belongs to the Pup ligase/Pup deamidase family. Pup-conjugating enzyme subfamily.

The catalysed reaction is ATP + [prokaryotic ubiquitin-like protein]-L-glutamate + [protein]-L-lysine = ADP + phosphate + N(6)-([prokaryotic ubiquitin-like protein]-gamma-L-glutamyl)-[protein]-L-lysine.. It participates in protein degradation; proteasomal Pup-dependent pathway. The protein operates within protein modification; protein pupylation. In terms of biological role, catalyzes the covalent attachment of the prokaryotic ubiquitin-like protein modifier Pup to the proteasomal substrate proteins, thereby targeting them for proteasomal degradation. This tagging system is termed pupylation. The ligation reaction involves the side-chain carboxylate of the C-terminal glutamate of Pup and the side-chain amino group of a substrate lysine. In Streptomyces griseus subsp. griseus (strain JCM 4626 / CBS 651.72 / NBRC 13350 / KCC S-0626 / ISP 5235), this protein is Pup--protein ligase.